A 177-amino-acid chain; its full sequence is Nucleoside triphosphate/diphosphate phosphatase (177 aa).

The active-site Proton donor is Arg-23. Asn-87, Asp-103, Asp-105, Asp-107, Asp-120, and Glu-123 together coordinate Mg(2+).

It belongs to the Ntdp family. The cofactor is Mg(2+).

The catalysed reaction is a ribonucleoside 5'-triphosphate + H2O = a ribonucleoside 5'-diphosphate + phosphate + H(+). The enzyme catalyses a ribonucleoside 5'-diphosphate + H2O = a ribonucleoside 5'-phosphate + phosphate + H(+). In terms of biological role, has nucleoside phosphatase activity towards nucleoside triphosphates and nucleoside diphosphates. This Streptococcus thermophilus (strain CNRZ 1066) protein is Nucleoside triphosphate/diphosphate phosphatase.